Here is a 79-residue protein sequence, read N- to C-terminus: Serine protease inhibitor Kazal-type 1 (79 aa).

Positions 1–23 (MKVASIFLLTALVLMSLSGNSGA) are cleaved as a signal peptide. In terms of domain architecture, Kazal-like spans 26–79 (LGREAKCTNEVNGCPRIYNPVCGTDGVTYSNECLLCMENKERQTPVLIQKSGPC). 3 disulfide bridges follow: Cys-32–Cys-61, Cys-39–Cys-58, and Cys-47–Cys-79.

The protein localises to the secreted. Serine protease inhibitor which exhibits anti-trypsin activity. In the pancreas, protects against trypsin-catalyzed premature activation of zymogens. In terms of biological role, in the male reproductive tract, binds to sperm heads where it modulates sperm capacitance by inhibiting calcium uptake and nitrogen oxide (NO) production. The polypeptide is Serine protease inhibitor Kazal-type 1 (SPINK1) (Bos taurus (Bovine)).